A 259-amino-acid chain; its full sequence is Aliphatic sulfonates import ATP-binding protein SsuB 2 (259 aa).

Residues 17-238 (LDILGLWKGF…VRSSQAFTSI (222 aa)) form the ABC transporter domain. Residue 49–56 (GRSGCGKS) coordinates ATP.

The protein belongs to the ABC transporter superfamily. Aliphatic sulfonates importer (TC 3.A.1.17.2) family. As to quaternary structure, the complex is composed of two ATP-binding proteins (SsuB), two transmembrane proteins (SsuC) and a solute-binding protein (SsuA).

It localises to the cell inner membrane. The catalysed reaction is ATP + H2O + aliphatic sulfonate-[sulfonate-binding protein]Side 1 = ADP + phosphate + aliphatic sulfonateSide 2 + [sulfonate-binding protein]Side 1.. Part of the ABC transporter complex SsuABC involved in aliphatic sulfonates import. Responsible for energy coupling to the transport system. This chain is Aliphatic sulfonates import ATP-binding protein SsuB 2, found in Agrobacterium fabrum (strain C58 / ATCC 33970) (Agrobacterium tumefaciens (strain C58)).